Here is a 376-residue protein sequence, read N- to C-terminus: MPISYNKASVVVSLQSIIANYRRIRTVAQRPMPVIKSDAYGHGLEAVGMALEAEGARECAVGTVGEGAKLRKAGFGADIVALLGALDREDAQLAASSGIIPTVLDIAGLERLAAQGTPERPVRVALKFDTGMARLGFTEHDVSALCERLRTLPSVRPVMAVSHLAVADDPTQSAFTMAQGAAFARIMAGLRSNFPDIMGSLSNSAATLAHPQLHWDVQRPGIALYGSNPLRGTALARHGEGLLPAMSVSVPVLQVHPLPAGRSISYGRTYTATKDATVAIIAAGYADNYSRALSGRGVAVAGGRRVPVLGRVCMQTTAIDVTDVPGIATGDRVWLLGGPGPATVSADELADLWGTISYEVLCLLGMNPRRHDDSVE.

Lysine 36 functions as the Proton acceptor; specific for D-alanine in the catalytic mechanism. Lysine 36 is subject to N6-(pyridoxal phosphate)lysine. Position 134 (arginine 134) interacts with substrate. Tyrosine 266 acts as the Proton acceptor; specific for L-alanine in catalysis. Methionine 314 is a substrate binding site.

The protein belongs to the alanine racemase family. Requires pyridoxal 5'-phosphate as cofactor.

The enzyme catalyses L-alanine = D-alanine. It functions in the pathway amino-acid biosynthesis; D-alanine biosynthesis; D-alanine from L-alanine: step 1/1. Its function is as follows. Catalyzes the interconversion of L-alanine and D-alanine. May also act on other amino acids. The protein is Alanine racemase (alr) of Nitratidesulfovibrio vulgaris (strain ATCC 29579 / DSM 644 / CCUG 34227 / NCIMB 8303 / VKM B-1760 / Hildenborough) (Desulfovibrio vulgaris).